The chain runs to 112 residues: Putative iron-sulfur cluster insertion protein ErpA (112 aa).

Cysteine 40, cysteine 104, and cysteine 106 together coordinate iron-sulfur cluster.

It belongs to the HesB/IscA family. In terms of assembly, homodimer. It depends on iron-sulfur cluster as a cofactor.

In terms of biological role, required for insertion of 4Fe-4S clusters. This chain is Putative iron-sulfur cluster insertion protein ErpA, found in Neisseria gonorrhoeae (strain ATCC 700825 / FA 1090).